The following is a 372-amino-acid chain: AA9 family lytic polysaccharide monooxygenase C (372 aa).

Residues 1 to 16 (MFRSALFLLLAPLALS) form the signal peptide. Cu(2+)-binding residues include H17 and H99. Residues C59 and C189 are joined by a disulfide bond. O2-binding residues include H174 and Q184. Residue Y186 coordinates Cu(2+).

The protein belongs to the polysaccharide monooxygenase AA9 family. Cu(2+) serves as cofactor.

The protein localises to the secreted. The enzyme catalyses [(1-&gt;4)-beta-D-glucosyl]n+m + reduced acceptor + O2 = 4-dehydro-beta-D-glucosyl-[(1-&gt;4)-beta-D-glucosyl]n-1 + [(1-&gt;4)-beta-D-glucosyl]m + acceptor + H2O.. In terms of biological role, lytic polysaccharide monooxygenase (LPMO) that depolymerizes crystalline and amorphous polysaccharides via the oxidation of scissile alpha- or beta-(1-4)-glycosidic bonds, yielding C1 or C4 oxidation products. Catalysis by LPMOs requires the reduction of the active-site copper from Cu(II) to Cu(I) by a reducing agent and H(2)O(2) or O(2) as a cosubstrate. This chain is AA9 family lytic polysaccharide monooxygenase C, found in Aspergillus tamarii.